The primary structure comprises 382 residues: Apolipoprotein A-IV (382 aa).

Positions 1 to 20 (MFLKAVVLTLSLVAVTGAQA) are cleaved as a signal peptide. Tandem repeats lie at residues 33–54 (DYFS…KSEL), 60–81 (ALFQ…KKLV), 82–103 (PFAT…EEIR), 115–136 (PHAD…QRLG), 137–158 (PYAE…NQLT), 159–180 (AHAQ…ASLT), 181–202 (PYAD…GHLT), 203–224 (PYAD…RSLA), 225–246 (PYAQ…FQMK), 247–268 (KNAE…QKLV), 269–286 (PVAE…EELQ), 287–308 (KSLA…RNVG), and 309–330 (PYGE…QKLG). Residues 33 to 330 (DYFSQLSNNA…QVEELRQKLG (298 aa)) are 13 X 22 AA approximate tandem repeats.

This sequence belongs to the apolipoprotein A1/A4/E family. Homodimer. Phosphorylation sites are present in the extracellular medium.

The protein resides in the secreted. Its function is as follows. May have a role in chylomicrons and VLDL secretion and catabolism. Required for efficient activation of lipoprotein lipase by ApoC-II; potent activator of LCAT. Apoa-IV is a major component of HDL and chylomicrons. This Neomonachus schauinslandi (Hawaiian monk seal) protein is Apolipoprotein A-IV (APOA4).